Reading from the N-terminus, the 1070-residue chain is DNA-directed RNA polymerase subunit beta (1070 aa).

The protein belongs to the RNA polymerase beta chain family. In plastids the minimal PEP RNA polymerase catalytic core is composed of four subunits: alpha, beta, beta', and beta''. When a (nuclear-encoded) sigma factor is associated with the core the holoenzyme is formed, which can initiate transcription.

The protein resides in the plastid. It is found in the chloroplast. It catalyses the reaction RNA(n) + a ribonucleoside 5'-triphosphate = RNA(n+1) + diphosphate. Its function is as follows. DNA-dependent RNA polymerase catalyzes the transcription of DNA into RNA using the four ribonucleoside triphosphates as substrates. The polypeptide is DNA-directed RNA polymerase subunit beta (Silene latifolia (White campion)).